The following is a 70-amino-acid chain: Large ribosomal subunit protein eL38 (70 aa).

A Glycyl lysine isopeptide (Lys-Gly) (interchain with G-Cter in SUMO2) cross-link involves residue Lys-4. The residue at position 9 (Lys-9) is an N6-acetyllysine; alternate. A Glycyl lysine isopeptide (Lys-Gly) (interchain with G-Cter in SUMO2); alternate cross-link involves residue Lys-9. The residue at position 67 (Lys-67) is an N6-acetyllysine.

This sequence belongs to the eukaryotic ribosomal protein eL38 family. As to quaternary structure, component of the large ribosomal subunit.

The protein resides in the cytoplasm. Its function is as follows. Component of the large ribosomal subunit. The ribosome is a large ribonucleoprotein complex responsible for the synthesis of proteins in the cell. The sequence is that of Large ribosomal subunit protein eL38 (RPL38) from Homo sapiens (Human).